A 186-amino-acid chain; its full sequence is ATP synthase subunit delta (186 aa).

This sequence belongs to the ATPase delta chain family. In terms of assembly, F-type ATPases have 2 components, F(1) - the catalytic core - and F(0) - the membrane proton channel. F(1) has five subunits: alpha(3), beta(3), gamma(1), delta(1), epsilon(1). F(0) has three main subunits: a(1), b(2) and c(10-14). The alpha and beta chains form an alternating ring which encloses part of the gamma chain. F(1) is attached to F(0) by a central stalk formed by the gamma and epsilon chains, while a peripheral stalk is formed by the delta and b chains.

The protein resides in the cell inner membrane. Functionally, f(1)F(0) ATP synthase produces ATP from ADP in the presence of a proton or sodium gradient. F-type ATPases consist of two structural domains, F(1) containing the extramembraneous catalytic core and F(0) containing the membrane proton channel, linked together by a central stalk and a peripheral stalk. During catalysis, ATP synthesis in the catalytic domain of F(1) is coupled via a rotary mechanism of the central stalk subunits to proton translocation. In terms of biological role, this protein is part of the stalk that links CF(0) to CF(1). It either transmits conformational changes from CF(0) to CF(1) or is implicated in proton conduction. The chain is ATP synthase subunit delta from Brucella anthropi (strain ATCC 49188 / DSM 6882 / CCUG 24695 / JCM 21032 / LMG 3331 / NBRC 15819 / NCTC 12168 / Alc 37) (Ochrobactrum anthropi).